Reading from the N-terminus, the 167-residue chain is Crossover junction endodeoxyribonuclease RuvC (167 aa).

Active-site residues include Asp11, Glu71, and Asp143. Positions 11, 71, and 143 each coordinate Mg(2+).

Belongs to the RuvC family. Homodimer which binds Holliday junction (HJ) DNA. The HJ becomes 2-fold symmetrical on binding to RuvC with unstacked arms; it has a different conformation from HJ DNA in complex with RuvA. In the full resolvosome a probable DNA-RuvA(4)-RuvB(12)-RuvC(2) complex forms which resolves the HJ. It depends on Mg(2+) as a cofactor.

The protein localises to the cytoplasm. It catalyses the reaction Endonucleolytic cleavage at a junction such as a reciprocal single-stranded crossover between two homologous DNA duplexes (Holliday junction).. Functionally, the RuvA-RuvB-RuvC complex processes Holliday junction (HJ) DNA during genetic recombination and DNA repair. Endonuclease that resolves HJ intermediates. Cleaves cruciform DNA by making single-stranded nicks across the HJ at symmetrical positions within the homologous arms, yielding a 5'-phosphate and a 3'-hydroxyl group; requires a central core of homology in the junction. The consensus cleavage sequence is 5'-(A/T)TT(C/G)-3'. Cleavage occurs on the 3'-side of the TT dinucleotide at the point of strand exchange. HJ branch migration catalyzed by RuvA-RuvB allows RuvC to scan DNA until it finds its consensus sequence, where it cleaves and resolves the cruciform DNA. The polypeptide is Crossover junction endodeoxyribonuclease RuvC (Bartonella bacilliformis (strain ATCC 35685 / KC583 / Herrer 020/F12,63)).